A 103-amino-acid chain; its full sequence is DNA-directed RNA polymerase subunit omega (103 aa).

The interval Glu52–Ile103 is disordered. Residues Pro62–Ile103 are compositionally biased toward basic and acidic residues.

This sequence belongs to the RNA polymerase subunit omega family. The RNAP catalytic core consists of 2 alpha, 1 beta, 1 beta' and 1 omega subunit. When a sigma factor is associated with the core the holoenzyme is formed, which can initiate transcription.

The catalysed reaction is RNA(n) + a ribonucleoside 5'-triphosphate = RNA(n+1) + diphosphate. In terms of biological role, promotes RNA polymerase assembly. Latches the N- and C-terminal regions of the beta' subunit thereby facilitating its interaction with the beta and alpha subunits. The chain is DNA-directed RNA polymerase subunit omega from Streptococcus pneumoniae serotype 19F (strain G54).